A 518-amino-acid polypeptide reads, in one-letter code: Probable bifunctional methylthioribulose-1-phosphate dehydratase/enolase-phosphatase E1 (518 aa).

The methylthioribulose-1-phosphate dehydratase stretch occupies residues 1–247 (MAAAPPAVAV…AIKLHQIGLD (247 aa)). Residue C119 coordinates substrate. Positions 137 and 139 each coordinate Zn(2+). E162 acts as the Proton donor/acceptor; for methylthioribulose-1-phosphate dehydratase activity in catalysis. H212 provides a ligand contact to Zn(2+). The tract at residues 279–518 (IVLDIEGTTT…FKTITSFAEI (240 aa)) is enolase-phosphatase E1. Mg(2+)-binding residues include D282 and E284. Residues 417 to 418 (SS) and K451 each bind substrate. Mg(2+) is bound at residue D477.

This sequence in the N-terminal section; belongs to the aldolase class II family. MtnB subfamily. The protein in the C-terminal section; belongs to the HAD-like hydrolase superfamily. MasA/MtnC family. The cofactor is Zn(2+). It depends on Mg(2+) as a cofactor.

The enzyme catalyses 5-(methylsulfanyl)-D-ribulose 1-phosphate = 5-methylsulfanyl-2,3-dioxopentyl phosphate + H2O. It carries out the reaction 5-methylsulfanyl-2,3-dioxopentyl phosphate + H2O = 1,2-dihydroxy-5-(methylsulfanyl)pent-1-en-3-one + phosphate. It functions in the pathway amino-acid biosynthesis; L-methionine biosynthesis via salvage pathway; L-methionine from S-methyl-5-thio-alpha-D-ribose 1-phosphate: step 2/6. It participates in amino-acid biosynthesis; L-methionine biosynthesis via salvage pathway; L-methionine from S-methyl-5-thio-alpha-D-ribose 1-phosphate: step 3/6. The protein operates within amino-acid biosynthesis; L-methionine biosynthesis via salvage pathway; L-methionine from S-methyl-5-thio-alpha-D-ribose 1-phosphate: step 4/6. This Populus trichocarpa (Western balsam poplar) protein is Probable bifunctional methylthioribulose-1-phosphate dehydratase/enolase-phosphatase E1.